The primary structure comprises 158 residues: NAD(P)H-quinone oxidoreductase subunit J, chloroplastic (158 aa).

This sequence belongs to the complex I 30 kDa subunit family. As to quaternary structure, NDH is composed of at least 16 different subunits, 5 of which are encoded in the nucleus.

The protein resides in the plastid. The protein localises to the chloroplast thylakoid membrane. It catalyses the reaction a plastoquinone + NADH + (n+1) H(+)(in) = a plastoquinol + NAD(+) + n H(+)(out). The catalysed reaction is a plastoquinone + NADPH + (n+1) H(+)(in) = a plastoquinol + NADP(+) + n H(+)(out). Its function is as follows. NDH shuttles electrons from NAD(P)H:plastoquinone, via FMN and iron-sulfur (Fe-S) centers, to quinones in the photosynthetic chain and possibly in a chloroplast respiratory chain. The immediate electron acceptor for the enzyme in this species is believed to be plastoquinone. Couples the redox reaction to proton translocation, and thus conserves the redox energy in a proton gradient. In Morus indica (Mulberry), this protein is NAD(P)H-quinone oxidoreductase subunit J, chloroplastic.